A 689-amino-acid chain; its full sequence is Glycine--tRNA ligase beta subunit (689 aa).

This sequence belongs to the class-II aminoacyl-tRNA synthetase family. Tetramer of two alpha and two beta subunits.

Its subcellular location is the cytoplasm. It catalyses the reaction tRNA(Gly) + glycine + ATP = glycyl-tRNA(Gly) + AMP + diphosphate. The chain is Glycine--tRNA ligase beta subunit from Dictyoglomus turgidum (strain DSM 6724 / Z-1310).